A 423-amino-acid chain; its full sequence is Adenylosuccinate synthetase (423 aa).

GTP-binding positions include 12-18 (GDEGKGK) and 40-42 (GHT). Asp-13 (proton acceptor) is an active-site residue. Mg(2+) is bound by residues Asp-13 and Gly-40. IMP is bound by residues 13–16 (DEGK), 38–41 (NAGH), Thr-129, Arg-143, Gln-221, Thr-236, and Arg-300. The active-site Proton donor is the His-41. 296 to 302 (SVTGRKR) contributes to the substrate binding site. GTP is bound by residues Arg-302 and 408–410 (SVG).

The protein belongs to the adenylosuccinate synthetase family. As to quaternary structure, homodimer. Requires Mg(2+) as cofactor.

It localises to the cytoplasm. It catalyses the reaction IMP + L-aspartate + GTP = N(6)-(1,2-dicarboxyethyl)-AMP + GDP + phosphate + 2 H(+). It functions in the pathway purine metabolism; AMP biosynthesis via de novo pathway; AMP from IMP: step 1/2. In terms of biological role, plays an important role in the de novo pathway of purine nucleotide biosynthesis. Catalyzes the first committed step in the biosynthesis of AMP from IMP. The sequence is that of Adenylosuccinate synthetase from Bacteroides thetaiotaomicron (strain ATCC 29148 / DSM 2079 / JCM 5827 / CCUG 10774 / NCTC 10582 / VPI-5482 / E50).